The primary structure comprises 193 residues: Ion-translocating oxidoreductase complex subunit A (193 aa).

A run of 6 helical transmembrane segments spans residues 5–25, 39–59, 63–83, 102–122, 134–154, and 171–191; these read LLLF…FLGL, MGMG…AWLI, ILIP…VIAV, LLGI…VALL, ALYG…FAAI, and AIAL…NGLV.

This sequence belongs to the NqrDE/RnfAE family. In terms of assembly, the complex is composed of six subunits: RsxA, RsxB, RsxC, RsxD, RsxE and RsxG.

It is found in the cell inner membrane. Part of a membrane-bound complex that couples electron transfer with translocation of ions across the membrane. Required to maintain the reduced state of SoxR. The sequence is that of Ion-translocating oxidoreductase complex subunit A from Shigella sonnei (strain Ss046).